A 128-amino-acid chain; its full sequence is Transcription antitermination protein NusB (128 aa).

It belongs to the NusB family.

Functionally, involved in transcription antitermination. Required for transcription of ribosomal RNA (rRNA) genes. Binds specifically to the boxA antiterminator sequence of the ribosomal RNA (rrn) operons. This Listeria welshimeri serovar 6b (strain ATCC 35897 / DSM 20650 / CCUG 15529 / CIP 8149 / NCTC 11857 / SLCC 5334 / V8) protein is Transcription antitermination protein NusB.